Here is a 244-residue protein sequence, read N- to C-terminus: NH(3)-dependent NAD(+) synthetase (244 aa).

Gly29–Ser36 provides a ligand contact to ATP. A Mg(2+)-binding site is contributed by Asp35. Arg113 lines the deamido-NAD(+) pocket. Thr133 serves as a coordination point for ATP. Residue Glu138 coordinates Mg(2+). Deamido-NAD(+) contacts are provided by Lys146 and Asp153. Residues Lys162 and Thr184 each contribute to the ATP site. Deamido-NAD(+) is bound at residue His230–Lys231.

It belongs to the NAD synthetase family. In terms of assembly, homodimer.

It carries out the reaction deamido-NAD(+) + NH4(+) + ATP = AMP + diphosphate + NAD(+) + H(+). The protein operates within cofactor biosynthesis; NAD(+) biosynthesis; NAD(+) from deamido-NAD(+) (ammonia route): step 1/1. Catalyzes the ATP-dependent amidation of deamido-NAD to form NAD. Uses ammonia as a nitrogen source. The sequence is that of NH(3)-dependent NAD(+) synthetase from Mesoplasma florum (strain ATCC 33453 / NBRC 100688 / NCTC 11704 / L1) (Acholeplasma florum).